The following is a 693-amino-acid chain: G1/S-specific cyclin CCN1 (693 aa).

Over residues 273 to 298 the composition is skewed to polar residues; sequence QKKQKKALSSNSSRTTTASYTHQNQS. Disordered regions lie at residues 273–320, 465–571, 595–615, and 662–693; these read QKKQ…EDDD, DEDE…PPGS, SNSS…EKRY, and NNTN…QYHQ. Acidic residues-rich tracts occupy residues 306 to 320 and 465 to 476; these read DEDI…EDDD and DEDENVSTDDEA. Composition is skewed to polar residues over residues 489–516 and 524–563; these read DGNN…NHPQ and PSAT…SSFA. Low complexity predominate over residues 666–685; it reads SSSPLMNQQQQQQVTQSSLY.

Belongs to the cyclin family. As to quaternary structure, interacts with CDC28. The CDC28-CCN1 complex associates with septin CDC11 upon hyphal induction.

G1/S-specific cyclin essential for the control of the cell cycle at the G1/S (start) transition and for maintenance of filamentous growth. Through binding to CDC28 controls the phosphorylation of CDC11 and SEC2 upon induction of filamentous growth. This chain is G1/S-specific cyclin CCN1 (CCN1), found in Candida albicans (strain SC5314 / ATCC MYA-2876) (Yeast).